The sequence spans 347 residues: Doublecortin domain-containing protein 2C (347 aa).

Doublecortin domains lie at 16–98 (KTIL…LDYI) and 136–217 (RYIN…IPYW). Positions 235–260 (KYTQTKKRVESKVKEPLQNDSVPPRS) are disordered. The span at 241–251 (KRVESKVKEPL) shows a compositional bias: basic and acidic residues.

Its subcellular location is the cell projection. It localises to the cilium. The protein localises to the flagellum. The protein resides in the cytoplasm. The protein is Doublecortin domain-containing protein 2C of Mus musculus (Mouse).